The following is a 78-amino-acid chain: UPF0291 protein Ldb1355 (78 aa).

This sequence belongs to the UPF0291 family.

It is found in the cytoplasm. The polypeptide is UPF0291 protein Ldb1355 (Lactobacillus delbrueckii subsp. bulgaricus (strain ATCC 11842 / DSM 20081 / BCRC 10696 / JCM 1002 / NBRC 13953 / NCIMB 11778 / NCTC 12712 / WDCM 00102 / Lb 14)).